Reading from the N-terminus, the 509-residue chain is MFS transporter fsdG (509 aa).

2 N-linked (GlcNAc...) asparagine glycosylation sites follow: Asn-8 and Asn-26. 4 helical membrane-spanning segments follow: residues 63-83 (FLIH…ATTM), 103-123 (IALT…VTSP), 139-159 (IFFL…MFIA), and 162-182 (FLAG…IADF). N-linked (GlcNAc...) asparagine glycosylation is present at Asn-189. A run of 4 helical transmembrane segments spans residues 195–215 (LFAL…GFVA), 222–242 (WTFR…CIFL), 298–318 (LIFL…FGLI), and 341–361 (GLSY…FNFI). N-linked (GlcNAc...) asparagine glycosylation is present at Asn-367. Helical transmembrane passes span 380 to 400 (YLPL…WYGW), 408 to 428 (WVVP…IIMP), 442 to 462 (AASV…FLPL), and 474 to 494 (GWGN…PAIF).

This sequence belongs to the major facilitator superfamily.

Its subcellular location is the cell membrane. Its function is as follows. Efflux pump that might be required for efficient secretion of fusaridione A or other secondary metabolies produced by the fusaridione A gene cluster. The protein is MFS transporter fsdG of Fusarium heterosporum.